We begin with the raw amino-acid sequence, 241 residues long: Transmembrane protein 176A (241 aa).

At Ser38 the chain carries Phosphoserine. 4 helical membrane-spanning segments follow: residues 65-85 (WVMQ…LYIF), 93-113 (SGAP…AFIY), 127-147 (LLAL…AGRF), and 193-213 (LFIS…LASL).

Belongs to the TMEM176 family. Interacts with MCOLN2.

The protein resides in the membrane. In Bos taurus (Bovine), this protein is Transmembrane protein 176A (TMEM176A).